We begin with the raw amino-acid sequence, 402 residues long: DNA polymerase IV (402 aa).

Positions 5 to 187 constitute a UmuC domain; it reads ILLADMNSFY…LPVRELFGVG (183 aa). Residues D9 and D105 each contribute to the Mg(2+) site. E106 is a catalytic residue.

The protein belongs to the DNA polymerase type-Y family. As to quaternary structure, monomer. The cofactor is Mg(2+).

The protein resides in the cytoplasm. It carries out the reaction DNA(n) + a 2'-deoxyribonucleoside 5'-triphosphate = DNA(n+1) + diphosphate. Poorly processive, error-prone DNA polymerase involved in untargeted mutagenesis. Copies undamaged DNA at stalled replication forks, which arise in vivo from mismatched or misaligned primer ends. These misaligned primers can be extended by PolIV. Exhibits no 3'-5' exonuclease (proofreading) activity. May be involved in translesional synthesis, in conjunction with the beta clamp from PolIII. This Pelotomaculum thermopropionicum (strain DSM 13744 / JCM 10971 / SI) protein is DNA polymerase IV.